A 128-amino-acid polypeptide reads, in one-letter code: Large ribosomal subunit protein eL32 (128 aa).

This sequence belongs to the eukaryotic ribosomal protein eL32 family.

In Thermoplasma volcanium (strain ATCC 51530 / DSM 4299 / JCM 9571 / NBRC 15438 / GSS1), this protein is Large ribosomal subunit protein eL32 (rpl32e).